The sequence spans 233 residues: Orotidine 5'-phosphate decarboxylase (233 aa).

Substrate-binding positions include Asp11, Lys34, 61–70, Thr117, Arg179, Gln189, Gly209, and Arg210; that span reads DLKLHDIPNT. Lys63 acts as the Proton donor in catalysis.

It belongs to the OMP decarboxylase family. Type 1 subfamily. As to quaternary structure, homodimer.

The catalysed reaction is orotidine 5'-phosphate + H(+) = UMP + CO2. Its pathway is pyrimidine metabolism; UMP biosynthesis via de novo pathway; UMP from orotate: step 2/2. Functionally, catalyzes the decarboxylation of orotidine 5'-monophosphate (OMP) to uridine 5'-monophosphate (UMP). The sequence is that of Orotidine 5'-phosphate decarboxylase from Streptococcus agalactiae serotype Ia (strain ATCC 27591 / A909 / CDC SS700).